The primary structure comprises 53 residues: Large ribosomal subunit protein bL32 (53 aa).

The span at 1–20 (MAVPKRRVSHTRAAKRRTHY) shows a compositional bias: basic residues. The interval 1–53 (MAVPKRRVSHTRAAKRRTHYKLTLPMPVKDADGTWRMPHHMNMTTGEYKTTKA) is disordered. The span at 42-53 (NMTTGEYKTTKA) shows a compositional bias: polar residues.

Belongs to the bacterial ribosomal protein bL32 family.

The protein is Large ribosomal subunit protein bL32 of Sulfurovum sp. (strain NBC37-1).